Consider the following 141-residue polypeptide: Ubiquitin-like protein ATG12 (141 aa).

The interval Met1 to Lys53 is disordered. Positions Leu23–Ala40 are enriched in low complexity. Gly141 is covalently cross-linked (Glycyl lysine isopeptide (Gly-Lys) (interchain with K-? in acceptor protein)).

The protein belongs to the ATG12 family. Forms a conjugate with ATG5. Part of the minor complex composed of 4 sets of ATG12-ATG5 and ATG16L1 (400 kDa); this complex interacts with ATG3 leading to disruption of ATG7 interaction and promotion of ATG8-like proteins lipidation. Forms an 800-kDa complex composed of ATG12-ATG5 and ATG16L2. Interacts with DHX58/RIG-1, IFIH1/MDA5 and MAVS/IPS-1 in monomeric form as well as in ATG12-ATG5 conjugate. The interaction with MAVS is further enhanced upon vesicular stomatitis virus (VSV) infection. Interacts with ATG3; this interaction is essential for phosphatidylethanolamine (PE)-conjugated ATG8-like proteins formation. Interacts with ATG7. Interacts with ATG10. The ATG12-ATG5 conjugate interacts with RAB33A; this interaction is bridged by ATG16L1 and promotes ATG12-ATG5-ATG16L1 complex recruitment to phagophores. Interacts with TECPR1. Interacts with SH3BGRL. The ATG12-ATG5 conjugate interacts with PDCD6IP (via the BRO1 domain); this interaction is bridged by ATG12 and promotes multiple PDCD6IP-mediated functions such as endolysosomal trafficking, macroautophagy and exosome biogenesis. Acetylated by EP300. As to expression, ubiquitous.

It is found in the cytoplasm. Its subcellular location is the preautophagosomal structure membrane. In terms of biological role, ubiquitin-like protein involved in autophagy vesicles formation. Conjugation with ATG5 through a ubiquitin-like conjugating system involving also ATG7 as an E1-like activating enzyme and ATG10 as an E2-like conjugating enzyme, is essential for its function. The ATG12-ATG5 conjugate acts as an E3-like enzyme which is required for lipidation of ATG8 family proteins and their association to the vesicle membranes. As part of the ATG8 conjugation system with ATG5 and ATG16L1, required for recruitment of LRRK2 to stressed lysosomes and induction of LRRK2 kinase activity in response to lysosomal stress. (Microbial infection) May act as a proviral factor. In association with ATG5, negatively regulates the innate antiviral immune response by impairing the type I IFN production pathway upon vesicular stomatitis virus (VSV) infection. This chain is Ubiquitin-like protein ATG12, found in Mus musculus (Mouse).